The chain runs to 94 residues: MWLPHAFLRVVSPSALRLMPANGCAVPAGCVQCSNRDVGFATGARVFLCCQTGVRIVGSLLLFGAAMEKPRAQSRTTAFKRGVSCTQKFSRSRF.

This is an uncharacterized protein from Treponema pallidum (strain Nichols).